The chain runs to 302 residues: Phosphoribosylaminoimidazole-succinocarboxamide synthase (302 aa).

The protein belongs to the SAICAR synthetase family.

It carries out the reaction 5-amino-1-(5-phospho-D-ribosyl)imidazole-4-carboxylate + L-aspartate + ATP = (2S)-2-[5-amino-1-(5-phospho-beta-D-ribosyl)imidazole-4-carboxamido]succinate + ADP + phosphate + 2 H(+). It participates in purine metabolism; IMP biosynthesis via de novo pathway; 5-amino-1-(5-phospho-D-ribosyl)imidazole-4-carboxamide from 5-amino-1-(5-phospho-D-ribosyl)imidazole-4-carboxylate: step 1/2. The protein is Phosphoribosylaminoimidazole-succinocarboxamide synthase of Cupriavidus metallidurans (strain ATCC 43123 / DSM 2839 / NBRC 102507 / CH34) (Ralstonia metallidurans).